A 640-amino-acid polypeptide reads, in one-letter code: Tyrosine--tRNA ligase, mitochondrial (640 aa).

Tyrosine 100 contacts L-tyrosine. Aspartate 104 contacts ATP. The 'HIGH' region motif lies at 105–114 (PTAPSLHIGH). The L-tyrosine site is built by aspartate 144, tyrosine 248, glutamine 252, aspartate 255, and glutamine 274. The short motif at 322–326 (KFGKS) is the 'KMSKS' region element. Residue lysine 325 coordinates ATP.

The protein belongs to the class-I aminoacyl-tRNA synthetase family.

The protein localises to the mitochondrion matrix. It catalyses the reaction tRNA(Tyr) + L-tyrosine + ATP = L-tyrosyl-tRNA(Tyr) + AMP + diphosphate + H(+). Functionally, has both an aminoacyl-tRNA synthetase activity and is involved in the splicing of group I introns. This is Tyrosine--tRNA ligase, mitochondrial (YTS1) from Podospora anserina (Pleurage anserina).